Here is a 228-residue protein sequence, read N- to C-terminus: MAKDVKPTRKNLMAIEDRIDLSERGHDTLEQKRDGLIMEFMDILDQAQDVRSDVSENYETAQRKIDMARAMEGDVAVRGAAAALKEHPEITTQSKNIMGVVVPQIESSKVKKSLDERGYGLLGSSARIDEAADAYEELLEKVILAAEVETAMKKMLTEIETTKRRVNALEFTLLPRLYENQEYIEQKLEEQEREEIFRLKKIKAKKEEEEKAEAAAEAAAVEDPEPAD.

Over residues lysine 205–alanine 214 the composition is skewed to basic and acidic residues. Residues lysine 205 to aspartate 228 are disordered.

It belongs to the V-ATPase D subunit family. In terms of assembly, has multiple subunits with at least A(3), B(3), C, D, E, F, H, I and proteolipid K(x).

It is found in the cell membrane. In terms of biological role, component of the A-type ATP synthase that produces ATP from ADP in the presence of a proton gradient across the membrane. This is A-type ATP synthase subunit D from Halorubrum lacusprofundi (strain ATCC 49239 / DSM 5036 / JCM 8891 / ACAM 34).